Here is a 73-residue protein sequence, read N- to C-terminus: Conotoxin CnIIIE (73 aa).

Residues 1 to 19 form the signal peptide; the sequence is MSKLGVLLTICLLLFPLTA. A propeptide spanning residues 20–49 is cleaved from the precursor; that stretch reads LPMDGDQSVDRPAERMQDDISSEQYPLFNQ. 3 cysteine pairs are disulfide-bonded: C53–C72, C54–C70, and C60–C73.

The protein belongs to the conotoxin M superfamily. Expressed by the venom duct.

It is found in the secreted. In terms of biological role, shows a paralytic effect in fish. This chain is Conotoxin CnIIIE, found in Conus consors (Singed cone).